We begin with the raw amino-acid sequence, 487 residues long: Multiple inositol polyphosphate phosphatase 1 (487 aa).

A signal peptide spans 1 to 30 (MLRAPGCLLRTSVAPAAALAAALLSSLARC). The active site involves histidine 89. Asparagine 242 and asparagine 481 each carry an N-linked (GlcNAc...) asparagine glycan. The short motif at 484-487 (SDEL) is the Prevents secretion from ER element.

Belongs to the histidine acid phosphatase family. MINPP1 subfamily. N-glycosylated. Widely expressed with highest levels in kidney, liver, cerebellum and placenta.

The protein resides in the endoplasmic reticulum lumen. Its subcellular location is the secreted. The protein localises to the cell membrane. It carries out the reaction 1D-myo-inositol hexakisphosphate + H2O = 1D-myo-inositol 1,2,4,5,6-pentakisphosphate + phosphate. The catalysed reaction is 1D-myo-inositol 1,2,4,5,6-pentakisphosphate + H2O = 1D-myo-inositol 1,2,5,6-tetrakisphosphate + phosphate. It catalyses the reaction 1D-myo-inositol 1,2,5,6-tetrakisphosphate + H2O = 1D-myo-inositol 1,2,6-trisphosphate + phosphate. The enzyme catalyses 1D-myo-inositol 1,2,6-trisphosphate + H2O = 1D-myo-inositol 1,2-bisphosphate + phosphate. It carries out the reaction 1D-myo-inositol 1,2-bisphosphate + H2O = 1D-myo-inositol 2-phosphate + phosphate. The catalysed reaction is 1D-myo-inositol hexakisphosphate + H2O = 1D-myo-inositol 1,2,3,5,6-pentakisphosphate + phosphate. It catalyses the reaction 1D-myo-inositol 1,2,3,5,6-pentakisphosphate + H2O = 1D-myo-inositol 1,2,3,6-tetrakisphosphate + phosphate. The enzyme catalyses 1D-myo-inositol 1,2,3,6-tetrakisphosphate + H2O = 1D-myo-inositol 1,2,3-trisphosphate + phosphate. It carries out the reaction 1D-myo-inositol 1,2,3-trisphosphate + H2O = 1D-myo-inositol 2,3-bisphosphate + phosphate. The catalysed reaction is 1D-myo-inositol 2,3-bisphosphate + H2O = 1D-myo-inositol 2-phosphate + phosphate. It catalyses the reaction 1D-myo-inositol 1,3,4,5,6-pentakisphosphate + H2O = 1D-myo-inositol 1,4,5,6-tetrakisphosphate + phosphate. The enzyme catalyses 1D-myo-inositol 1,4,5,6-tetrakisphosphate + H2O = 1D-myo-inositol 1,4,5-trisphosphate + phosphate. It carries out the reaction (2R)-2,3-bisphosphoglycerate + H2O = (2R)-2-phosphoglycerate + phosphate. In terms of biological role, multiple inositol polyphosphate phosphatase that hydrolyzes 1D-myo-inositol 1,3,4,5,6-pentakisphosphate (InsP5[2OH]) and 1D-myo-inositol hexakisphosphate (InsP6) to a range of less phosphorylated inositol phosphates. This regulates the availability of these various small molecule second messengers and metal chelators which control many aspects of cell physiology. Has a weak in vitro activity towards 1D-myo-inositol 1,4,5-trisphosphate which is unlikely to be physiologically relevant. By regulating intracellular inositol polyphosphates pools, which act as metal chelators, it may control the availability of intracellular calcium and iron, which are important for proper neuronal development and homeostasis. May have a dual substrate specificity, and function as a 2,3-bisphosphoglycerate 3-phosphatase hydrolyzing 2,3-bisphosphoglycerate to 2-phosphoglycerate. 2,3-bisphosphoglycerate (BPG) is formed as part of the Rapoport-Luebering glycolytic bypass and is a regulator of systemic oxygen homeostasis as the major allosteric effector of hemoglobin. This chain is Multiple inositol polyphosphate phosphatase 1, found in Homo sapiens (Human).